Reading from the N-terminus, the 302-residue chain is Putative gluconeogenesis factor (302 aa).

Belongs to the gluconeogenesis factor family.

The protein localises to the cytoplasm. Functionally, required for morphogenesis under gluconeogenic growth conditions. The polypeptide is Putative gluconeogenesis factor (ybhK) (Salmonella typhi).